Reading from the N-terminus, the 105-residue chain is Small ribosomal subunit protein uS10 (105 aa).

This sequence belongs to the universal ribosomal protein uS10 family. Part of the 30S ribosomal subunit.

Functionally, involved in the binding of tRNA to the ribosomes. The sequence is that of Small ribosomal subunit protein uS10 from Rickettsia bellii (strain OSU 85-389).